Reading from the N-terminus, the 152-residue chain is Large-conductance mechanosensitive channel (152 aa).

Helical transmembrane passes span 14-34 (VIDL…VKSL) and 84-104 (VGQF…VFLL).

The protein belongs to the MscL family. Homopentamer.

The protein localises to the cell inner membrane. Functionally, channel that opens in response to stretch forces in the membrane lipid bilayer. May participate in the regulation of osmotic pressure changes within the cell. The sequence is that of Large-conductance mechanosensitive channel from Laribacter hongkongensis (strain HLHK9).